Consider the following 284-residue polypeptide: TM2 domain-containing protein almondex (284 aa).

The first 32 residues, 1–32 (MRLQRQCIVVNMRSAIVLIMIFVLTGIRNSET), serve as a signal peptide directing secretion. The interval 33–63 (ASGGNQMDLSDSKGDHKDNSNASNGNGNAND) is disordered. The Extracellular segment spans residues 33 to 225 (ASGGNQMDLS…NWTQGYRWST (193 aa)). Over residues 42 to 51 (SDSKGDHKDN) the composition is skewed to basic and acidic residues. Residues 52–63 (SNASNGNGNAND) are compositionally biased toward low complexity. Residues Asn-53, Asn-89, Asn-141, Asn-194, Asn-206, and Asn-216 are each glycosylated (N-linked (GlcNAc...) asparagine). In terms of domain architecture, TM2 spans 220–267 (GYRWSTALLISLTLGGFGADRFYLGHWQEGIGKLFSFGGLGVWTIIDV). A helical transmembrane segment spans residues 226 to 246 (ALLISLTLGGFGADRFYLGHW). At 247–249 (QEG) the chain is on the cytoplasmic side. Residues 250–270 (IGKLFSFGGLGVWTIIDVLLI) form a helical membrane-spanning segment. The Extracellular segment spans residues 271 to 284 (SMHYLGPADGSLYI).

This sequence belongs to the TM2 family. In terms of tissue distribution, expressed in female ovary, mainly in nurse cells (at protein level). Expressed in the brain at low levels (at protein level).

Its subcellular location is the membrane. It localises to the vesicle. In terms of biological role, positive regulator of Notch signaling during lateral inhibition and boundary formation. Interacts with Notch signaling at the membrane, at the level of gamma-secretase-mediated S3 cleavage. May regulate Notch signaling by regulating the subcellular localization of N/Notch in a context dependent manner. Maternal neurogenic factor involved in Notch signaling-dependent mesectodermal and neuroectodermal specification during early embryogenesis. Functions cooperatively with bisc/TM2D1 and amrt/TM2D2. Required for maintenance of neuronal function. Involved in imaginal specification of eyes and wings. The sequence is that of TM2 domain-containing protein almondex from Drosophila melanogaster (Fruit fly).